The sequence spans 1010 residues: Trifunctional purine biosynthetic protein adenosine-3 (1010 aa).

Ala-2 is modified (N-acetylalanine). Residue Ser-10 is modified to Phosphoserine. The ATP-grasp domain occupies 111 to 318; it reads KEFMDRHGIP…LYEVIQSTLD (208 aa). Residues 190–193, Glu-197, Arg-220, and Asn-229 each bind ATP; that span reads EELL. Residues Glu-288 and Asn-290 each coordinate Mg(2+). Lys-350 carries the post-translational modification N6-acetyllysine. The segment at 434–809 is AIRS domain; it reads SLTYKESGVD…HFSFEKKKAR (376 aa). At Ser-440 the chain carries Phosphoserine. At Thr-682 the chain carries Phosphothreonine. Ser-796 and Ser-802 each carry phosphoserine. A GART domain region spans residues 810–1010; the sequence is VAVLISGTGS…NGKICWVKEE (201 aa). 818–820 is a N(1)-(5-phospho-beta-D-ribosyl)glycinamide binding site; the sequence is GSN. (6R)-10-formyltetrahydrofolate is bound by residues Arg-871, 896 to 899, and Asn-913; that span reads MRIL. The Proton donor role is filled by His-915. (6R)-10-formyltetrahydrofolate is bound at residue 947 to 951; sequence AEDVD. Residue 977 to 980 coordinates N(1)-(5-phospho-beta-D-ribosyl)glycinamide; the sequence is KLAE.

The protein in the N-terminal section; belongs to the GARS family. This sequence in the central section; belongs to the AIR synthase family. It in the C-terminal section; belongs to the GART family. As to quaternary structure, homodimer. Requires Mg(2+) as cofactor. It depends on Mn(2+) as a cofactor.

It carries out the reaction 5-phospho-beta-D-ribosylamine + glycine + ATP = N(1)-(5-phospho-beta-D-ribosyl)glycinamide + ADP + phosphate + H(+). The enzyme catalyses N(1)-(5-phospho-beta-D-ribosyl)glycinamide + (6R)-10-formyltetrahydrofolate = N(2)-formyl-N(1)-(5-phospho-beta-D-ribosyl)glycinamide + (6S)-5,6,7,8-tetrahydrofolate + H(+). It catalyses the reaction 2-formamido-N(1)-(5-O-phospho-beta-D-ribosyl)acetamidine + ATP = 5-amino-1-(5-phospho-beta-D-ribosyl)imidazole + ADP + phosphate + H(+). The protein operates within purine metabolism; IMP biosynthesis via de novo pathway; 5-amino-1-(5-phospho-D-ribosyl)imidazole from N(2)-formyl-N(1)-(5-phospho-D-ribosyl)glycinamide: step 2/2. It functions in the pathway purine metabolism; IMP biosynthesis via de novo pathway; N(1)-(5-phospho-D-ribosyl)glycinamide from 5-phospho-alpha-D-ribose 1-diphosphate: step 2/2. Its pathway is purine metabolism; IMP biosynthesis via de novo pathway; N(2)-formyl-N(1)-(5-phospho-D-ribosyl)glycinamide from N(1)-(5-phospho-D-ribosyl)glycinamide (10-formyl THF route): step 1/1. Functionally, trifunctional enzyme that catalyzes three distinct reactions as part of the 'de novo' inosine monophosphate biosynthetic pathway. This is Trifunctional purine biosynthetic protein adenosine-3 (GART) from Homo sapiens (Human).